A 90-amino-acid polypeptide reads, in one-letter code: Elongation factor 1-beta (90 aa).

This sequence belongs to the EF-1-beta/EF-1-delta family.

Promotes the exchange of GDP for GTP in EF-1-alpha/GDP, thus allowing the regeneration of EF-1-alpha/GTP that could then be used to form the ternary complex EF-1-alpha/GTP/AAtRNA. In Sulfolobus acidocaldarius (strain ATCC 33909 / DSM 639 / JCM 8929 / NBRC 15157 / NCIMB 11770), this protein is Elongation factor 1-beta.